We begin with the raw amino-acid sequence, 177 residues long: Large ribosomal subunit protein uL6 (177 aa).

This sequence belongs to the universal ribosomal protein uL6 family. Part of the 50S ribosomal subunit.

In terms of biological role, this protein binds to the 23S rRNA, and is important in its secondary structure. It is located near the subunit interface in the base of the L7/L12 stalk, and near the tRNA binding site of the peptidyltransferase center. The chain is Large ribosomal subunit protein uL6 from Salmonella arizonae (strain ATCC BAA-731 / CDC346-86 / RSK2980).